Reading from the N-terminus, the 189-residue chain is DAN domain family member 5 (189 aa).

An N-terminal signal peptide occupies residues 1 to 22 (MLLGQLSTLLCLLSGALPTGSG). Asn38 carries an N-linked (GlcNAc...) asparagine glycan. 4 disulfide bridges follow: Cys101–Cys148, Cys115–Cys162, Cys125–Cys183, and Cys129–Cys185. The region spanning 101-186 (CKAVPFVQVF…TMLIEGCHCS (86 aa)) is the CTCK domain.

The protein belongs to the DAN family. In terms of tissue distribution, expressed in the retina, in inner segments of photoreceptors, at or close to the outer plexiform layer and in the ganglion cell layer (at protein level).

Its subcellular location is the secreted. Functionally, antagonist of the extracellular signaling protein NODAL, which is required for correct left-right patterning during embryonic development. Antagonist of BMP and TGF-beta signaling. Independently of its role in left-right axis establishment, plays a role during heart development, possibly through the regulation of TGF-beta/Nodal signaling pathway. Displays anti-angiogenic activity by inhibiting endothelial sprouting, migration, and proliferation. Once internalized by endothelial cells, may alter their redox and glycolytic balance. In Homo sapiens (Human), this protein is DAN domain family member 5 (DAND5).